A 267-amino-acid chain; its full sequence is Ribosomal RNA small subunit methyltransferase A (267 aa).

S-adenosyl-L-methionine contacts are provided by Leu-20, Gly-45, Glu-68, Asp-91, and Asn-113.

This sequence belongs to the class I-like SAM-binding methyltransferase superfamily. rRNA adenine N(6)-methyltransferase family. RsmA subfamily.

It localises to the cytoplasm. The catalysed reaction is adenosine(1518)/adenosine(1519) in 16S rRNA + 4 S-adenosyl-L-methionine = N(6)-dimethyladenosine(1518)/N(6)-dimethyladenosine(1519) in 16S rRNA + 4 S-adenosyl-L-homocysteine + 4 H(+). In terms of biological role, specifically dimethylates two adjacent adenosines (A1518 and A1519) in the loop of a conserved hairpin near the 3'-end of 16S rRNA in the 30S particle. May play a critical role in biogenesis of 30S subunits. The sequence is that of Ribosomal RNA small subunit methyltransferase A from Blochmanniella pennsylvanica (strain BPEN).